The primary structure comprises 443 residues: Na(+)-translocating ferredoxin:NAD(+) oxidoreductase complex subunit C (443 aa).

4Fe-4S ferredoxin-type domains are found at residues 359 to 391 (ESAK…IAEY) and 398 to 428 (DKCE…VSSI). Positions 369, 372, 375, 379, 408, 411, 414, and 418 each coordinate [4Fe-4S] cluster.

This sequence belongs to the 4Fe4S bacterial-type ferredoxin family. RnfC subfamily. The complex is composed of six subunits: RnfA, RnfB, RnfC, RnfD, RnfE and RnfG. It depends on [4Fe-4S] cluster as a cofactor.

The protein resides in the cell membrane. It carries out the reaction 2 reduced [2Fe-2S]-[ferredoxin] + Na(+)(in) + NAD(+) + H(+) = 2 oxidized [2Fe-2S]-[ferredoxin] + Na(+)(out) + NADH. In terms of biological role, part of a membrane-bound complex that couples electron transfer with translocation of ions across the membrane. Couples electron transfer from reduced ferredoxin to NAD(+) with electrogenic movement of Na(+) out of the cell. Involved in caffeate respiration. This is Na(+)-translocating ferredoxin:NAD(+) oxidoreductase complex subunit C from Acetobacterium woodii (strain ATCC 29683 / DSM 1030 / JCM 2381 / KCTC 1655 / WB1).